Consider the following 302-residue polypeptide: Sulfate adenylyltransferase subunit 2 (302 aa).

Residues 280-302 (RQGRAIDHDQSGSMELKKRQGYF) form a disordered region.

Belongs to the PAPS reductase family. CysD subfamily. In terms of assembly, heterodimer composed of CysD, the smaller subunit, and CysN.

The enzyme catalyses sulfate + ATP + H(+) = adenosine 5'-phosphosulfate + diphosphate. The protein operates within sulfur metabolism; hydrogen sulfide biosynthesis; sulfite from sulfate: step 1/3. Its function is as follows. With CysN forms the ATP sulfurylase (ATPS) that catalyzes the adenylation of sulfate producing adenosine 5'-phosphosulfate (APS) and diphosphate, the first enzymatic step in sulfur assimilation pathway. APS synthesis involves the formation of a high-energy phosphoric-sulfuric acid anhydride bond driven by GTP hydrolysis by CysN coupled to ATP hydrolysis by CysD. This is Sulfate adenylyltransferase subunit 2 from Vibrio parahaemolyticus serotype O3:K6 (strain RIMD 2210633).